The sequence spans 448 residues: Tubulin beta-1 chain (448 aa).

Residues Gln-11, Glu-72, Ser-141, Gly-145, Thr-146, Gly-147, Asn-207, and Asn-229 each coordinate GTP. Glu-72 contacts Mg(2+). The tract at residues 424–448 is disordered; that stretch reads QQYQDAGMDDDEAEEAYEEEEPVEE. A compositionally biased stretch (acidic residues) spans 430–448; sequence GMDDDEAEEAYEEEEPVEE.

Belongs to the tubulin family. In terms of assembly, dimer of alpha and beta chains. A typical microtubule is a hollow water-filled tube with an outer diameter of 25 nm and an inner diameter of 15 nM. Alpha-beta heterodimers associate head-to-tail to form protofilaments running lengthwise along the microtubule wall with the beta-tubulin subunit facing the microtubule plus end conferring a structural polarity. Microtubules usually have 13 protofilaments but different protofilament numbers can be found in some organisms and specialized cells. The cofactor is Mg(2+).

The protein resides in the cytoplasm. The protein localises to the cytoskeleton. Tubulin is the major constituent of microtubules, a cylinder consisting of laterally associated linear protofilaments composed of alpha- and beta-tubulin heterodimers. Microtubules grow by the addition of GTP-tubulin dimers to the microtubule end, where a stabilizing cap forms. Below the cap, tubulin dimers are in GDP-bound state, owing to GTPase activity of alpha-tubulin. This is Tubulin beta-1 chain (TUB1) from Colletotrichum gloeosporioides (Anthracnose fungus).